The sequence spans 561 residues: MACPF domain-containing protein CAD1 (561 aa).

In terms of domain architecture, MACPF spans 11–314 (VPSSEALTTT…PPIEDLQYFL (304 aa)). The segment at 489 to 514 (VASSGRLEPGGPSTSSSTEEVSGQSG) is disordered. Residues 500–513 (PSTSSSTEEVSGQS) are compositionally biased toward polar residues.

This sequence belongs to the complement C6/C7/C8/C9 (TC 1.C.39) family. Mainly expressed in the vascular system.

Negatively controls the salicylic acid (SA)-mediated pathway of programmed cell death in plant immunity. This is MACPF domain-containing protein CAD1 (CAD1) from Arabidopsis thaliana (Mouse-ear cress).